Consider the following 625-residue polypeptide: Phosphomethylpyrimidine synthase (625 aa).

Residues Asn-230, Met-259, Tyr-288, His-324, 344–346, 385–388, and Glu-424 each bind substrate; these read SRG and DGLR. Residue His-428 participates in Zn(2+) binding. Tyr-451 serves as a coordination point for substrate. Residue His-492 coordinates Zn(2+). [4Fe-4S] cluster is bound by residues Cys-572, Cys-575, and Cys-580.

This sequence belongs to the ThiC family. As to quaternary structure, homodimer. [4Fe-4S] cluster serves as cofactor.

The enzyme catalyses 5-amino-1-(5-phospho-beta-D-ribosyl)imidazole + S-adenosyl-L-methionine = 4-amino-2-methyl-5-(phosphooxymethyl)pyrimidine + CO + 5'-deoxyadenosine + formate + L-methionine + 3 H(+). Its pathway is cofactor biosynthesis; thiamine diphosphate biosynthesis. Its function is as follows. Catalyzes the synthesis of the hydroxymethylpyrimidine phosphate (HMP-P) moiety of thiamine from aminoimidazole ribotide (AIR) in a radical S-adenosyl-L-methionine (SAM)-dependent reaction. The polypeptide is Phosphomethylpyrimidine synthase (Xanthomonas axonopodis pv. citri (strain 306)).